The primary structure comprises 600 residues: Sulfite reductase [NADPH] flavoprotein alpha-component (600 aa).

In terms of domain architecture, Flavodoxin-like spans 63–201; that stretch reads ITLISASQTG…VADQWRKQLT (139 aa). Residues 69 to 74, 116 to 119, and 152 to 161 contribute to the FMN site; these read SQTGNA, STQG, and LGDTSYERFC. The 215-residue stretch at 235-449 folds into the FAD-binding FR-type domain; it reads QAPLTAALAT…IEHNDNFRLP (215 aa). FAD-binding positions include T323, H357, 387–390, 405–407, Y411, and 420–423; these read RLYS, TVG, and GGAS. Residues 520–521, 526–530, and D562 each bind NADP(+); these read SR and KIYVQ. Y600 serves as a coordination point for FAD.

This sequence belongs to the NADPH-dependent sulphite reductase flavoprotein subunit CysJ family. It in the N-terminal section; belongs to the flavodoxin family. In the C-terminal section; belongs to the flavoprotein pyridine nucleotide cytochrome reductase family. Alpha(8)-beta(8). The alpha component is a flavoprotein, the beta component is a hemoprotein. The cofactor is FAD. Requires FMN as cofactor.

The catalysed reaction is hydrogen sulfide + 3 NADP(+) + 3 H2O = sulfite + 3 NADPH + 4 H(+). Its pathway is sulfur metabolism; hydrogen sulfide biosynthesis; hydrogen sulfide from sulfite (NADPH route): step 1/1. Component of the sulfite reductase complex that catalyzes the 6-electron reduction of sulfite to sulfide. This is one of several activities required for the biosynthesis of L-cysteine from sulfate. The flavoprotein component catalyzes the electron flow from NADPH -&gt; FAD -&gt; FMN to the hemoprotein component. The protein is Sulfite reductase [NADPH] flavoprotein alpha-component of Photorhabdus laumondii subsp. laumondii (strain DSM 15139 / CIP 105565 / TT01) (Photorhabdus luminescens subsp. laumondii).